Here is a 320-residue protein sequence, read N- to C-terminus: 7-acetyl-epi-neemfruitin B aldo-keto reductase (320 aa).

Residue Asp51 participates in NADP(+) binding. Tyr56 (proton donor) is an active-site residue. Residues Gln186 and 264-272 each bind NADP(+); that span reads FNKQRMEEN.

It belongs to the aldo/keto reductase family. As to expression, mainly expressed in petioles and, to a lower extent, in roots.

It carries out the reaction 7-acetyl-epi-neemfruitin B + AH2 + H2O = (1S,3bR,4R,5aR,9aR,9bR,11aS)-1-[(4R)-5-[(2S)-3,3-dimethyloxiran-2-yl]-1,4-dihydroxybutan-2-yl]-3b,6,6,9a,11a-pentamethyl-7-oxo-1H,2H,3bH,4H,5H,5aH,6H,7H,9aH,9bH,10H,11H,11aH-cyclopenta[a]phenanthren-4-yl acetate + acetate + A + H(+). It functions in the pathway secondary metabolite biosynthesis; terpenoid biosynthesis. Its function is as follows. Aldo-keto reductase involved in the biosynthesis of limonoids triterpene natural products such as azadirachtin, an antifeedant widely used as bioinsecticide, and possessing many medicinal applications including anti-tumoral, anti-malarial, anti-rheumatic, antibacterial, anti-inflammatory, anti-pyretic and diuretic effects. Can use 7-acetyl-epi-neemfruitin B as substrate. The sequence is that of 7-acetyl-epi-neemfruitin B aldo-keto reductase from Melia azedarach (Chinaberry tree).